A 553-amino-acid chain; its full sequence is Undecaprenyl phosphate-alpha-4-amino-4-deoxy-L-arabinose arabinosyl transferase (553 aa).

12 helical membrane passes run 8–28, 81–101, 113–133, 136–156, 176–196, 204–224, 255–275, 289–309, 313–333, 351–371, 384–404, and 412–432; these read LLFS…RALW, FAVR…VYWL, LLSA…SYAV, PMVT…AQSA, LMTK…PWMI, LLLF…PWAI, APFW…VGLL, NSGS…FSLA, LPTY…HHGI, VAFG…WGLV, VLLG…CLVA, and AALC…DKVI.

The protein belongs to the glycosyltransferase 83 family.

Its subcellular location is the cell inner membrane. The enzyme catalyses 4-amino-4-deoxy-alpha-L-arabinopyranosyl di-trans,octa-cis-undecaprenyl phosphate + lipid IVA = lipid IIA + di-trans,octa-cis-undecaprenyl phosphate.. Its pathway is lipopolysaccharide metabolism; 4-amino-4-deoxy-beta-L-arabinose-lipid A biosynthesis. Its function is as follows. Catalyzes the transfer of the L-Ara4N moiety of the glycolipid undecaprenyl phosphate-alpha-L-Ara4N to lipid A. The modified arabinose is attached to lipid A and is required for resistance to polymyxin and cationic antimicrobial peptides. The protein is Undecaprenyl phosphate-alpha-4-amino-4-deoxy-L-arabinose arabinosyl transferase of Erwinia tasmaniensis (strain DSM 17950 / CFBP 7177 / CIP 109463 / NCPPB 4357 / Et1/99).